A 358-amino-acid chain; its full sequence is Ribosomal RNA large subunit methyltransferase M (358 aa).

S-adenosyl-L-methionine-binding positions include S191, 224 to 227 (APGG), D243, D263, and D279. K308 (proton acceptor) is an active-site residue.

Belongs to the class I-like SAM-binding methyltransferase superfamily. RNA methyltransferase RlmE family. RlmM subfamily. Monomer.

It localises to the cytoplasm. It carries out the reaction cytidine(2498) in 23S rRNA + S-adenosyl-L-methionine = 2'-O-methylcytidine(2498) in 23S rRNA + S-adenosyl-L-homocysteine + H(+). Functionally, catalyzes the 2'-O-methylation at nucleotide C2498 in 23S rRNA. This chain is Ribosomal RNA large subunit methyltransferase M, found in Marinobacter nauticus (strain ATCC 700491 / DSM 11845 / VT8) (Marinobacter aquaeolei).